The sequence spans 1114 residues: Putative surface protein SAV2496/SAV2497 (1114 aa).

The signal sequence occupies residues 1–50 (MRDKKGPVNKRVDFLSNKLNKYSIRKFTVGTASILIGSLMYLGTQQEAEA). Disordered regions lie at residues 76 to 116 (TNKD…EDTP), 440 to 473 (KFNPDLAPGTEKVTREGQKGEKTITTPTLKNPLT), and 496 to 1088 (EYGP…TGLE). Composition is skewed to basic and acidic residues over residues 96 to 116 (DTIEHEASVKAEDISKKEDTP), 451 to 461 (KVTREGQKGEK), 505 to 523 (GHRDEFDPKLPTGEKEEVP), 554 to 570 (SIVEKEEIPFEKERKFN), and 579 to 589 (KVTREGQKGEK). In terms of domain architecture, G5 1 spans 419 to 501 (SAKNNNRIRK…NELTEYGPET (83 aa)). The G5 2 domain occupies 547 to 628 (YGPVKGDSIV…NELTEYGPET (82 aa)). Residues 590-604 (TTTPTLKNPLTGEII) show a composition bias toward low complexity. Composition is skewed to basic and acidic residues over residues 605–618 (SKGESKEEITKDPI), 632–650 (GHRDEFDPKLPTGEKEEVP), 681–697 (SIVEKEEIPFKKERKFN), 706–716 (KVTREGQKGEK), 733–746 (SKGESKEEITKDPI), 760–778 (GHRDEFDPKLPTGEKEEVP), 809–825 (SIVEKEEIPFEKERKFN), 834–844 (KVTREGQKGEK), 861–874 (SKGESKEEITKDPV), 918–929 (KVIEEPVDDVIK), and 946–965 (FETKREFNPKLQPGEERVKQ). One can recognise a G5 3 domain in the interval 674 to 756 (YGPVKGDSIV…NELTEYGPET (83 aa)). The region spanning 802–884 (YGPVKGDSIV…NELTEFGGEK (83 aa)) is the G5 4 domain. The 83-residue stretch at 930 to 1012 (HGPKTGTPET…DKIVEFGGEK (83 aa)) folds into the G5 5 domain. The segment covering 968–982 (QPGSKTITTPITVNP) has biased composition (polar residues). The segment covering 996–1026 (EITKQPVDKIVEFGGEKPKDPKGPENPEKPS) has biased composition (basic and acidic residues). Residues 1082 to 1086 (LPKTG) carry the LPXTG sorting signal motif. Thr1085 bears the Pentaglycyl murein peptidoglycan amidated threonine mark. Positions 1086–1114 (GLESTQKGLIFSSIIGIAGLMLLARRRKN) are cleaved as a propeptide — removed by sortase.

It is found in the secreted. The protein resides in the cell wall. The chain is Putative surface protein SAV2496/SAV2497 from Staphylococcus aureus (strain Mu50 / ATCC 700699).